Consider the following 457-residue polypeptide: Argininosuccinate lyase (457 aa).

Belongs to the lyase 1 family. Argininosuccinate lyase subfamily.

It localises to the cytoplasm. The enzyme catalyses 2-(N(omega)-L-arginino)succinate = fumarate + L-arginine. The protein operates within amino-acid biosynthesis; L-arginine biosynthesis; L-arginine from L-ornithine and carbamoyl phosphate: step 3/3. This Haemophilus influenzae (strain PittEE) protein is Argininosuccinate lyase.